The primary structure comprises 144 residues: 3-hydroxyacyl-[acyl-carrier-protein] dehydratase FabZ (144 aa).

His-51 is a catalytic residue.

This sequence belongs to the thioester dehydratase family. FabZ subfamily.

It is found in the cytoplasm. The catalysed reaction is a (3R)-hydroxyacyl-[ACP] = a (2E)-enoyl-[ACP] + H2O. Involved in unsaturated fatty acids biosynthesis. Catalyzes the dehydration of short chain beta-hydroxyacyl-ACPs and long chain saturated and unsaturated beta-hydroxyacyl-ACPs. The chain is 3-hydroxyacyl-[acyl-carrier-protein] dehydratase FabZ from Lactococcus lactis subsp. cremoris (strain SK11).